Reading from the N-terminus, the 208-residue chain is Nascent polypeptide-associated complex subunit alpha (208 aa).

Positions 1–19 (MSSSRIEELPDDDVPKTTV) are enriched in basic and acidic residues. 2 disordered regions span residues 1 to 50 (MSSS…HSRN) and 120 to 166 (QLAA…VFDA). Acidic residues predominate over residues 21 to 34 (DAADSSESEVEGAE). The region spanning 48–113 (SRNEKKARKA…AKIEDLNSQA (66 aa)) is the NAC-A/B domain. Residues 120–131 (QLAAAEAAGSNE) show a composition bias toward low complexity. Over residues 132 to 154 (HAGHDHASHDHGKGKAVESADKK) the composition is skewed to basic and acidic residues. Acidic residues predominate over residues 155 to 164 (DEEEDDEEVF). The UBA domain occupies 169–208 (LEAKDIELVMAQASVSRNKAIKALKENDNDIVNSIMALSV).

Belongs to the NAC-alpha family. Part of the nascent polypeptide-associated complex (NAC), consisting of EGD2 and EGD1. NAC associates with ribosomes via EGD1.

The protein localises to the cytoplasm. The protein resides in the nucleus. In terms of biological role, component of the nascent polypeptide-associated complex (NAC), a dynamic component of the ribosomal exit tunnel, protecting the emerging polypeptides from interaction with other cytoplasmic proteins to ensure appropriate nascent protein targeting. The NAC complex also promotes mitochondrial protein import by enhancing productive ribosome interactions with the outer mitochondrial membrane and blocks the inappropriate interaction of ribosomes translating non-secretory nascent polypeptides with translocation sites in the membrane of the endoplasmic reticulum. EGD2 may also be involved in transcription regulation. The chain is Nascent polypeptide-associated complex subunit alpha (EGD2) from Ajellomyces capsulatus (strain NAm1 / WU24) (Darling's disease fungus).